Consider the following 367-residue polypeptide: Glutamate 5-kinase (367 aa).

Position 9 (K9) interacts with ATP. 3 residues coordinate substrate: S49, D136, and N148. ATP contacts are provided by residues 168–169 (TD) and 210–216 (TGGMKSK). The PUA domain maps to 276–350 (SGQIEVDAGA…GMQSQDIQVR (75 aa)).

It belongs to the glutamate 5-kinase family.

It localises to the cytoplasm. It carries out the reaction L-glutamate + ATP = L-glutamyl 5-phosphate + ADP. It participates in amino-acid biosynthesis; L-proline biosynthesis; L-glutamate 5-semialdehyde from L-glutamate: step 1/2. In terms of biological role, catalyzes the transfer of a phosphate group to glutamate to form L-glutamate 5-phosphate. The sequence is that of Glutamate 5-kinase from Bacillus cereus (strain G9842).